The primary structure comprises 260 residues: uncharacterized protein (260 aa).

In terms of domain architecture, HTH iclR-type spans Val-7–Thr-67. Residues Ala-28–Asn-47 constitute a DNA-binding region (H-T-H motif). Residues Leu-82–Trp-251 enclose the IclR-ED domain.

This is an uncharacterized protein from Escherichia coli (strain K12).